Reading from the N-terminus, the 339-residue chain is D-erythrose-4-phosphate dehydrogenase (339 aa).

An NAD(+)-binding site is contributed by 11 to 12 (RI). Substrate-binding positions include 153 to 155 (SCT), Arg199, 212 to 213 (TK), and Arg235. The Nucleophile role is filled by Cys154. An NAD(+)-binding site is contributed by Asn317.

Belongs to the glyceraldehyde-3-phosphate dehydrogenase family. Epd subfamily. Homotetramer.

Its subcellular location is the cytoplasm. The enzyme catalyses D-erythrose 4-phosphate + NAD(+) + H2O = 4-phospho-D-erythronate + NADH + 2 H(+). Its pathway is cofactor biosynthesis; pyridoxine 5'-phosphate biosynthesis; pyridoxine 5'-phosphate from D-erythrose 4-phosphate: step 1/5. Catalyzes the NAD-dependent conversion of D-erythrose 4-phosphate to 4-phosphoerythronate. The sequence is that of D-erythrose-4-phosphate dehydrogenase from Shewanella pealeana (strain ATCC 700345 / ANG-SQ1).